We begin with the raw amino-acid sequence, 765 residues long: Probable serine/threonine-protein kinase DDB_G0271402 (765 aa).

Residues 35–328 (LEFGQEIGKG…KEITERLKSL (294 aa)) form the Protein kinase domain. ATP contacts are provided by residues 41 to 49 (IGKGAYGKI) and Lys-62. Asp-192 functions as the Proton acceptor in the catalytic mechanism. 7 disordered regions span residues 371-393 (IVHN…NNSN), 443-477 (SMGD…KIIN), 491-527 (SSDL…NNNS), 545-620 (PIQI…QQYQ), 654-684 (PLNI…HHHL), 699-738 (IISS…PTNI), and 746-765 (ASNS…TVQS). Positions 446–458 (DESDLDSDDEDDS) are enriched in acidic residues. Low complexity-rich tracts occupy residues 459 to 470 (YTSSASSSRCNS), 499 to 527 (NGNN…NNNS), 562 to 605 (PPTS…PKSN), 662 to 678 (NNNN…GNVN), and 699 to 720 (IISS…SLTS).

Belongs to the protein kinase superfamily. TKL Ser/Thr protein kinase family.

The enzyme catalyses L-seryl-[protein] + ATP = O-phospho-L-seryl-[protein] + ADP + H(+). It carries out the reaction L-threonyl-[protein] + ATP = O-phospho-L-threonyl-[protein] + ADP + H(+). The chain is Probable serine/threonine-protein kinase DDB_G0271402 from Dictyostelium discoideum (Social amoeba).